Here is a 485-residue protein sequence, read N- to C-terminus: UBX domain-containing protein 11 (485 aa).

Residues 1–26 form a disordered region; it reads MSSPLASLSKTRKVPLESEPVNPGRR. Positions 67–143 form a coiled coil; the sequence is HDSELLTSMA…VGEMERFLND (77 aa). The SEP domain occupies 224 to 288; that stretch reads LEPIPLKLYR…VSDLRNQVYP (65 aa). The region spanning 386 to 463 is the UBX domain; it reads PVPPLSMLRI…GLVPNATLLL (78 aa). A phosphoserine mark is found at Ser479 and Ser483.

In terms of assembly, interacts with GNA12, GNA13, RND1, RND2 and RND3. Strongly expressed in testis. Also expressed in lung, brain and thymus.

The protein localises to the cytoplasm. It is found in the cytoskeleton. May be involved in the reorganization of actin cytoskeleton mediated by RND1, RND2 and RND3. Promotes RHOA activation mediated by GNA12 and GNA13. The chain is UBX domain-containing protein 11 (Ubxn11) from Rattus norvegicus (Rat).